The chain runs to 357 residues: Peptide chain release factor 1 (357 aa).

The residue at position 236 (Gln236) is an N5-methylglutamine.

It belongs to the prokaryotic/mitochondrial release factor family. Post-translationally, methylated by PrmC. Methylation increases the termination efficiency of RF1.

The protein resides in the cytoplasm. Peptide chain release factor 1 directs the termination of translation in response to the peptide chain termination codons UAG and UAA. The chain is Peptide chain release factor 1 from Mycobacterium sp. (strain JLS).